A 266-amino-acid polypeptide reads, in one-letter code: Sec-independent protein translocase protein TatC (266 aa).

The next 6 helical transmembrane spans lie at 28-48, 93-113, 134-154, 183-203, 221-241, and 242-262; these read MIIATIILMNNKNVIFDYILF, FNIYVWTCFIGGFILSFPYIF, GIIMMVTFLFILGVLFGYFIL, LIMHSILSMGITFLFPIFIYF, HAFLILLILASAITPGDIFST, and IVVLIPLMILYQFSIYISFYV.

It belongs to the TatC family. In terms of assembly, forms a complex with TatA.

Its subcellular location is the cell inner membrane. Part of the twin-arginine translocation (Tat) system that transports large folded proteins containing a characteristic twin-arginine motif in their signal peptide across membranes. The polypeptide is Sec-independent protein translocase protein TatC (Blattabacterium sp. subsp. Periplaneta americana (strain BPLAN) (Periplaneta americana symbiotic bacterium)).